Reading from the N-terminus, the 484-residue chain is Crt homolog 2 (484 aa).

Residues 1–57 (MSEEKLPLLSPLNENDIENDYKDENLKSDLDKLSNVKKQSIIQRFKDYLKNSISKQT) lie on the Cytoplasmic side of the membrane. The helical transmembrane segment at 58-78 (ATVLVYVVLYILSGVINSLLL) threads the bilayer. The Vacuolar portion of the chain corresponds to 79–94 (KKVMNVFTNYGFFLNQ). The helical transmembrane segment at 95–115 (LTNYGYVPIFGAIVLYKILFT) threads the bilayer. Residues 116–128 (NDIPKDTRSFPQW) lie on the Cytoplasmic side of the membrane. The helical transmembrane segment at 129 to 149 (KFVIMGALDAVTGYFVVIGGI) threads the bilayer. Residues 150-154 (KTTGP) lie on the Vacuolar side of the membrane. The helical transmembrane segment at 155–175 (LQQLLNQSVIPFTMLLSFIFL) threads the bilayer. At 176–178 (KER) the chain is on the cytoplasmic side. Residues 179-199 (YSLIQLGGALIIIGGVVVSLI) traverse the membrane as a helical segment. Residues 200–210 (PSLTGGNTSGN) are Vacuolar-facing. N206 carries an N-linked (GlcNAc...) asparagine glycan. Residues 211-231 (MLFYNFFYLISMIPYAFSNVY) form a helical membrane-spanning segment. The Cytoplasmic segment spans residues 232–244 (KAIGFSTVEDMDV). A helical transmembrane segment spans residues 245 to 265 (WYLQYFDALYQSLVGTVLFPI). The Vacuolar segment spans residues 266–328 (NNWLPPPSDM…LGCDNCHGAW (63 aa)). N302 is a glycosylation site (N-linked (GlcNAc...) asparagine). The chain crosses the membrane as a helical span at residues 329-349 (VVVLIYMAVNVLYNVFILLVL). Residues 350 to 355 (KHAGAT) lie on the Cytoplasmic side of the membrane. The chain crosses the membrane as a helical span at residues 356–378 (VFSIANTLRLPLTNIAFSFKFIM). The Vacuolar portion of the chain corresponds to 379 to 382 (GSDS). A helical transmembrane segment spans residues 383-403 (NPFSGLSVAGLCIILLGLGGY). At 404–484 (RVGSMIKQKK…RNQNSIYGDQ (81 aa)) the chain is on the cytoplasmic side.

It belongs to the CRT-like transporter family.

It localises to the vacuole membrane. Functionally, nutrient transporter. Involved in maintaining the osmotic homeostasis of the digestive vacuole. This Dictyostelium discoideum (Social amoeba) protein is Crt homolog 2 (crtp2).